The chain runs to 125 residues: MIVALGADLVEIARVERLLSRHGERALRRLFHEEEVAYALARQNPFPSLAARLAAKEAFQKCWPESLSWKEVWVGMEGKRPALRFAPRIEARMAEEGLFAHLSLSHERSHALAVVVLEARARGGG.

The Mg(2+) site is built by D8 and E57.

Belongs to the P-Pant transferase superfamily. AcpS family. It depends on Mg(2+) as a cofactor.

The protein resides in the cytoplasm. It catalyses the reaction apo-[ACP] + CoA = holo-[ACP] + adenosine 3',5'-bisphosphate + H(+). Transfers the 4'-phosphopantetheine moiety from coenzyme A to a Ser of acyl-carrier-protein. The chain is Holo-[acyl-carrier-protein] synthase from Thermus thermophilus (strain ATCC BAA-163 / DSM 7039 / HB27).